Reading from the N-terminus, the 324-residue chain is Aprataxin (324 aa).

An FHA-like domain is found at 23–72 (SVTLGRGPDTKIKDKKCSREQVELRADCNRGFVTVKQLGVNPTLVDDVVV). A disordered region spans residues 100 to 160 (TEDTSRSKPS…QGLKASMQDP (61 aa)). Positions 111 to 125 (RAQQIQSPTKTTADV) are enriched in polar residues. The HIT domain maps to 150–255 (SQGLKASMQD…ISQDFDSPCL (106 aa)). 2 interaction with DNA substrate regions span residues 175–179 (DKYPK) and 237–238 (SM). Positions 240–244 (HVHLH) match the Histidine triad motif motif. Residue His-242 is the Tele-AMP-histidine intermediate of the active site. Residues 299–321 (LRCHVCGKEQTTIPKLKDHLKTH) form a C2H2-type zinc finger.

It is found in the nucleus. The protein localises to the nucleoplasm. It localises to the nucleolus. The enzyme catalyses a 5'-end adenosine-5'-diphospho-5'-2'-deoxyribonucleoside-DNA + H2O = a 5'-end 5'-phospho-2'-deoxyribonucleoside-DNA + AMP + 2 H(+). The catalysed reaction is a 5'-end adenosine-5'-diphospho-5'-ribonucleoside-2'-deoxyribonucleotide-DNA + H2O = a 5'-end 5'-phospho-ribonucleoside-2'-deoxyribonucleotide-DNA + AMP + 2 H(+). It carries out the reaction a 3'-end 2'-deoxyribonucleotide-3'-diphospho-5'-guanosine-DNA + H2O = a 3'-end 2'-deoxyribonucleotide 3'-phosphate-DNA + GMP + 2 H(+). In terms of biological role, DNA-binding protein involved in single-strand DNA break repair, double-strand DNA break repair and base excision repair. Resolves abortive DNA ligation intermediates formed either at base excision sites, or when DNA ligases attempt to repair non-ligatable breaks induced by reactive oxygen species. Catalyzes the release of adenylate groups covalently linked to 5'-phosphate termini, resulting in the production of 5'-phosphate termini that can be efficiently rejoined. Also able to hydrolyze adenosine 5'-monophosphoramidate (AMP-NH(2)) and diadenosine tetraphosphate (AppppA), but with lower catalytic activity. Likewise, catalyzes the release of 3'-linked guanosine (DNAppG) and inosine (DNAppI) from DNA, but has higher specific activity with 5'-linked adenosine (AppDNA). The protein is Aprataxin (aptx) of Danio rerio (Zebrafish).